Reading from the N-terminus, the 381-residue chain is Probable glucuronosyltransferase Os04g0103100 (381 aa).

The Cytoplasmic portion of the chain corresponds to 1 to 69 (MASIRRPHSP…HTSFRRPLPR (69 aa)). A disordered region spans residues 21–50 (HLGPFASSSPPSSPLRHSSSSSSPRSAAHH). The span at 26–46 (ASSSPPSSPLRHSSSSSSPRS) shows a compositional bias: low complexity. A helical; Signal-anchor for type II membrane protein transmembrane segment spans residues 70–90 (FAAFFLLGSFLGLLHFLSHLP). At 91–381 (RPLGPIPNPN…TDLDVIIPLK (291 aa)) the chain is on the lumenal side. The disordered stretch occupies residues 96-122 (IPNPNSHHRHRDPFPILQHPHPPSTPH). N-linked (GlcNAc...) asparagine glycans are attached at residues Asn-194 and Asn-296.

The protein belongs to the glycosyltransferase 43 family.

It is found in the golgi apparatus membrane. Its function is as follows. Involved in the synthesis of glucuronoxylan hemicellulose in secondary cell walls. The polypeptide is Probable glucuronosyltransferase Os04g0103100 (Oryza sativa subsp. japonica (Rice)).